We begin with the raw amino-acid sequence, 282 residues long: tRNA U34 carboxymethyltransferase (282 aa).

Carboxy-S-adenosyl-L-methionine-binding positions include K54, W68, K73, G92, 114 to 116, Y161, and R276; that span reads DPS.

This sequence belongs to the class I-like SAM-binding methyltransferase superfamily. CmoB family. As to quaternary structure, homotetramer.

It carries out the reaction carboxy-S-adenosyl-L-methionine + 5-hydroxyuridine(34) in tRNA = 5-carboxymethoxyuridine(34) in tRNA + S-adenosyl-L-homocysteine + H(+). Catalyzes carboxymethyl transfer from carboxy-S-adenosyl-L-methionine (Cx-SAM) to 5-hydroxyuridine (ho5U) to form 5-carboxymethoxyuridine (cmo5U) at position 34 in tRNAs. In Campylobacter fetus subsp. fetus (strain 82-40), this protein is tRNA U34 carboxymethyltransferase.